We begin with the raw amino-acid sequence, 53 residues long: UPF0391 membrane protein GFO_1615 (53 aa).

A run of 2 helical transmembrane segments spans residues 4–24 and 27–47; these read LIVIFLIIAIIAAIFGFGGVA and AADIAKIIFYIFLVLLVISVL.

This sequence belongs to the UPF0391 family.

The protein resides in the cell membrane. The protein is UPF0391 membrane protein GFO_1615 of Christiangramia forsetii (strain DSM 17595 / CGMCC 1.15422 / KT0803) (Gramella forsetii).